We begin with the raw amino-acid sequence, 410 residues long: Iron-sulfur cluster assembly SufBD family protein MTH1150 homolog (410 aa).

This sequence belongs to the iron-sulfur cluster assembly SufBD family.

The polypeptide is Iron-sulfur cluster assembly SufBD family protein MTH1150 homolog (Methanothermobacter thermautotrophicus (strain Winter) (Methanobacterium thermoautotrophicum)).